Here is a 254-residue protein sequence, read N- to C-terminus: Alcohol dehydrogenase (254 aa).

An NAD(+)-binding site is contributed by 10–33 (FVAGLGGIGLDTSREIVKSGPKNL). A substrate-binding site is contributed by Ser138. Tyr151 acts as the Proton acceptor in catalysis.

Belongs to the short-chain dehydrogenases/reductases (SDR) family. Homodimer.

The enzyme catalyses a primary alcohol + NAD(+) = an aldehyde + NADH + H(+). It carries out the reaction a secondary alcohol + NAD(+) = a ketone + NADH + H(+). This chain is Alcohol dehydrogenase (Adh), found in Drosophila planitibia (Fruit fly).